A 724-amino-acid chain; its full sequence is MHAELSEMELRIVARLNEEIGKDASQLHRASHLVSHYKKHLQVLSQTLDYEDPQNVSCYKTAFQCQQQVCESIDFELEKLAHFEDKLKRKLKECQPVLEGVAEDLDKVRQLQRLQQYLLLVQDIQEISAALGNAINGKDEDKLVNIYLTLYEGNDCEHSVVGRLHAVQAQSLKSFAERTAIYWHKLLLKRLSSAFEAVLKSMRWAHLEQQALNYSSARDTAKAQLLAEYMFLIKSPAEERAPLQSITPSIVCQPINRVVQLLLAPYRQRFQFHFTGTRQTNRLDKPEWFYTQILNWGKETHFFVGKTFQPAAIKAGKLDYNLRLEFIRGLVQLAIEKLAVDIEQIAQDQILFAHLLDETLAFESELRETFGYPASFPSAISVITQPMYLLRWISLEERFCAEKMDDILQAETPFQLIDPNSFENDLKIPKCADQFMRLLDAIKDRYYGLIQPGHQLQFLHLQLELIDSFRQRLVQLHSSGAVPSIPILNAINYLVMVLREWGENVHYLHLHAALAGPNATEINSVFEHAVAELEHWARQLMRNLATKATNEMKAKSMSYRRDAWPTMPEQNSREPFILSPSGGEMFQVLVTLLHNLERELSANLFTQTLRLIAHQIDDFMLESMVMNTKFSAAGAAQFNYDMTRNLFALFGQYTRRPELLFKRTHDACKLLAAARGTALLLLETLRGNQSVEEKTKPLRELHVLSMDSKQCIEVLERRMDIKMF.

The 562-residue stretch at 163–724 (RLHAVQAQSL…LERRMDIKMF (562 aa)) folds into the RINT1/TIP20 domain.

It belongs to the RINT1 family.

Functionally, during cytokinesis in male meiotic cells, required for completion of cleavage furrow ingression possibly in conjunction with Zw10. Required for maintenance of Golgi stack number and morphology. Essential for acroblast assembly. This chain is RINT1-like protein, found in Drosophila melanogaster (Fruit fly).